The primary structure comprises 887 residues: 3-hydroxy-3-methylglutaryl-coenzyme A reductase (887 aa).

Residues Met-1 to His-9 are Cytoplasmic-facing. Residues Gly-10–Gly-39 form a helical membrane-spanning segment. The Lumenal segment spans residues Asn-40 to Asp-56. The helical transmembrane segment at Val-57–Phe-78 threads the bilayer. The 158-residue stretch at Asp-61 to Leu-218 folds into the SSD domain. Residues Tyr-75–Phe-78 carry the INSIG-binding motif motif. Over Gln-79–Lys-89 the chain is Cytoplasmic. Lys-89 is covalently cross-linked (Glycyl lysine isopeptide (Lys-Gly) (interchain with G-Cter in ubiquitin)). The chain crosses the membrane as a helical span at residues Tyr-90–Leu-114. The Lumenal portion of the chain corresponds to Asp-115–Glu-123. The helical transmembrane segment at Ala-124 to Ser-149 threads the bilayer. At Gln-150–Arg-159 the chain is on the cytoplasmic side. A helical membrane pass occupies residues Gly-160 to Val-187. Topologically, residues Arg-188–Glu-191 are lumenal. The helical transmembrane segment at Ile-192–Leu-220 threads the bilayer. Over Glu-221–Lys-248 the chain is Cytoplasmic. A Glycyl lysine isopeptide (Lys-Gly) (interchain with G-Cter in ubiquitin) cross-link involves residue Lys-248. The chain crosses the membrane as a helical span at residues Pro-249–Ala-275. Residues Asp-276 to Lys-314 are Lumenal-facing. Asn-281 carries an N-linked (GlcNAc...) asparagine glycan. Residues Met-315 to Phe-339 form a helical membrane-spanning segment. Over Glu-340–Ala-887 the chain is Cytoplasmic. Residues Glu-558, Lys-690, and Asp-766 each act as charge relay system in the active site. Catalysis depends on His-865, which acts as the Proton donor. A Phosphoserine; by AMPK modification is found at Ser-871.

It belongs to the HMG-CoA reductase family. As to quaternary structure, homotetramer. Homodimer. Interacts (via its SSD) with INSIG1; the interaction, accelerated by sterols, leads to the recruitment of HMGCR to AMFR/gp78 for its ubiquitination by the sterol-mediated ERAD pathway. Interacts with UBIAD1. Undergoes sterol-mediated ubiquitination and ER-associated degradation (ERAD). Accumulation of sterols in the endoplasmic reticulum (ER) membrane, triggers binding of the reductase to the ER membrane protein INSIG1 or INSIG2. The INSIG1 binding leads to the recruitment of the ubiquitin ligase, AMFR/gp78, RNF139 or RNF145, initiating ubiquitination of the reductase. The ubiquitinated reductase is then extracted from the ER membrane and delivered to cytosolic 26S proteosomes by a mechanism probably mediated by the ATPase Valosin-containing protein VCP/p97. The INSIG2-binding leads to the recruitment of the ubiquitin ligase RNF139, initiating ubiquitination of the reductase. Lys-248 is the main site of ubiquitination. Ubiquitination is enhanced by the presence of a geranylgeranylated protein. In terms of processing, N-glycosylated. Deglycosylated by NGLY1 on release from the endoplasmic reticulum (ER) in a sterol-mediated manner. Post-translationally, phosphorylated. Phosphorylation at Ser-871 reduces the catalytic activity.

The protein resides in the endoplasmic reticulum membrane. The protein localises to the peroxisome membrane. The enzyme catalyses (R)-mevalonate + 2 NADP(+) + CoA = (3S)-3-hydroxy-3-methylglutaryl-CoA + 2 NADPH + 2 H(+). It participates in metabolic intermediate biosynthesis; (R)-mevalonate biosynthesis; (R)-mevalonate from acetyl-CoA: step 3/3. With respect to regulation, regulated by a negative feedback mechanism through sterols and non-sterol metabolites derived from mevalonate. Phosphorylation at Ser-871 down-regulates the catalytic activity. Catalyzes the conversion of (3S)-hydroxy-3-methylglutaryl-CoA (HMG-CoA) to mevalonic acid, the rate-limiting step in the synthesis of cholesterol and other isoprenoids, thus plays a critical role in cellular cholesterol homeostasis. The polypeptide is 3-hydroxy-3-methylglutaryl-coenzyme A reductase (Hmgcr) (Rattus norvegicus (Rat)).